The following is a 287-amino-acid chain: Pyridoxal 5'-phosphate synthase subunit PdxS (287 aa).

Asp-21 serves as a coordination point for D-ribose 5-phosphate. The active-site Schiff-base intermediate with D-ribose 5-phosphate is Lys-78. Position 150 (Gly-150) interacts with D-ribose 5-phosphate. Arg-162 lines the D-glyceraldehyde 3-phosphate pocket. D-ribose 5-phosphate-binding positions include Gly-211 and 232–233 (GS).

Belongs to the PdxS/SNZ family. In the presence of PdxT, forms a dodecamer of heterodimers.

The enzyme catalyses aldehydo-D-ribose 5-phosphate + D-glyceraldehyde 3-phosphate + L-glutamine = pyridoxal 5'-phosphate + L-glutamate + phosphate + 3 H2O + H(+). The protein operates within cofactor biosynthesis; pyridoxal 5'-phosphate biosynthesis. Catalyzes the formation of pyridoxal 5'-phosphate from ribose 5-phosphate (RBP), glyceraldehyde 3-phosphate (G3P) and ammonia. The ammonia is provided by the PdxT subunit. Can also use ribulose 5-phosphate and dihydroxyacetone phosphate as substrates, resulting from enzyme-catalyzed isomerization of RBP and G3P, respectively. The chain is Pyridoxal 5'-phosphate synthase subunit PdxS from Francisella philomiragia subsp. philomiragia (strain ATCC 25017 / CCUG 19701 / FSC 153 / O#319-036).